We begin with the raw amino-acid sequence, 383 residues long: Protein RecA (383 aa).

79–86 (GPESSGKT) lines the ATP pocket.

This sequence belongs to the RecA family.

Its subcellular location is the cytoplasm. Functionally, can catalyze the hydrolysis of ATP in the presence of single-stranded DNA, the ATP-dependent uptake of single-stranded DNA by duplex DNA, and the ATP-dependent hybridization of homologous single-stranded DNAs. It interacts with LexA causing its activation and leading to its autocatalytic cleavage. The chain is Protein RecA from Streptococcus gordonii (strain Challis / ATCC 35105 / BCRC 15272 / CH1 / DL1 / V288).